We begin with the raw amino-acid sequence, 390 residues long: Succinate--CoA ligase [ADP-forming] subunit beta (390 aa).

Positions 9 to 245 (KHLLKKYNIP…TTQEDEHETM (237 aa)) constitute an ATP-grasp domain. Residues Lys-46, 53–55 (GRG), Glu-99, Ser-102, and Glu-107 contribute to the ATP site. Positions 200 and 214 each coordinate Mg(2+). Substrate is bound by residues Asn-265 and 322–324 (GIV).

This sequence belongs to the succinate/malate CoA ligase beta subunit family. In terms of assembly, heterotetramer of two alpha and two beta subunits. It depends on Mg(2+) as a cofactor.

It carries out the reaction succinate + ATP + CoA = succinyl-CoA + ADP + phosphate. It catalyses the reaction GTP + succinate + CoA = succinyl-CoA + GDP + phosphate. The protein operates within carbohydrate metabolism; tricarboxylic acid cycle; succinate from succinyl-CoA (ligase route): step 1/1. Its function is as follows. Succinyl-CoA synthetase functions in the citric acid cycle (TCA), coupling the hydrolysis of succinyl-CoA to the synthesis of either ATP or GTP and thus represents the only step of substrate-level phosphorylation in the TCA. The beta subunit provides nucleotide specificity of the enzyme and binds the substrate succinate, while the binding sites for coenzyme A and phosphate are found in the alpha subunit. In Coxiella burnetii (strain RSA 493 / Nine Mile phase I), this protein is Succinate--CoA ligase [ADP-forming] subunit beta.